A 122-amino-acid chain; its full sequence is MSLTNEQIIEAIGQKSVMEIVELIKAMEETFGVTAAAAVAAGPAAAAPAAEEQTEFTIVLAEAGDKKVNVIKAVRELTGLGLKEAKAVVDGAPGVVKEGVSKEEAEAAKKALEEAGAKVELK.

The protein belongs to the bacterial ribosomal protein bL12 family. In terms of assembly, homodimer. Part of the ribosomal stalk of the 50S ribosomal subunit. Forms a multimeric L10(L12)X complex, where L10 forms an elongated spine to which 2 to 4 L12 dimers bind in a sequential fashion. Binds GTP-bound translation factors.

Forms part of the ribosomal stalk which helps the ribosome interact with GTP-bound translation factors. Is thus essential for accurate translation. This Stutzerimonas stutzeri (strain A1501) (Pseudomonas stutzeri) protein is Large ribosomal subunit protein bL12.